We begin with the raw amino-acid sequence, 372 residues long: Enolase (372 aa).

Positions 95 and 104 each coordinate substrate. The Proton donor role is filled by E147. 3 residues coordinate Mg(2+): D182, E232, and D257. Residues E232 and D257 each contribute to the substrate site. Residue K282 is the Proton acceptor of the active site. Substrate is bound by residues 309-312 and K333; that span reads SHRS.

Belongs to the enolase family. As to quaternary structure, homodimer. Mg(2+) serves as cofactor.

Its subcellular location is the cytoplasm. It carries out the reaction (2R)-2-phosphoglycerate = phosphoenolpyruvate + H2O. It participates in carbohydrate degradation; glycolysis; pyruvate from D-glyceraldehyde 3-phosphate: step 4/5. In Chlamydomonas reinhardtii (Chlamydomonas smithii), this protein is Enolase (ENO).